The primary structure comprises 295 residues: HTH-type transcriptional regulator ShiR (295 aa).

The region spanning 1-58 is the HTH lysR-type domain; sequence MEIRWLEGFIAVAEELHFSNAAIRLGMPQSPLSQLIRRLESELGQKLFDRSTRSVELT. Positions 18–37 form a DNA-binding region, H-T-H motif; sequence FSNAAIRLGMPQSPLSQLIR.

This sequence belongs to the LysR transcriptional regulatory family.

Functionally, activates expression of the shikimate transporter ShiA in the presence of shikimate. Binds to the shiA promoter region. The sequence is that of HTH-type transcriptional regulator ShiR from Corynebacterium glutamicum (strain R).